The chain runs to 162 residues: UPF0460 protein y4xD (162 aa).

Belongs to the UPF0460 family.

In Sinorhizobium fredii (strain NBRC 101917 / NGR234), this protein is UPF0460 protein y4xD.